The primary structure comprises 148 residues: Leghemoglobin-1 (148 aa).

The Globin domain maps to 2–146 (GFTDKQEALV…LATAIKKAMK (145 aa)). 2 positions are modified to nitrated tyrosine: Tyr-24 and Tyr-29. Ser-44 lines the heme b pocket. Ser-44 carries the post-translational modification Phosphoserine. His-61 is a binding site for O2. His-93 and Lys-96 together coordinate heme b. Tyr-134 is modified (nitrated tyrosine).

This sequence belongs to the plant globin family. Monomer. In terms of processing, nitrated in effective nodules and particularly in hypoxic conditions; this mechanism may play a protective role in the symbiosis by buffering toxic peroxynitrite NO(2)(-). Nitration level decrease during nodule senescence. Phosphorylation at Ser-44 disrupts the molecular environment of its porphyrin ring oxygen binding pocket, thus leading to a reduced oxygen consumption and to the delivery of oxygen O(2) to symbiosomes. Root nodules.

The protein localises to the cytoplasm. The protein resides in the cytosol. It localises to the nucleus. Functionally, leghemoglobin that reversibly binds oxygen O(2) through a pentacoordinated heme iron. In root nodules, facilitates the diffusion of oxygen to the bacteroids while preventing the bacterial nitrogenase from being inactivated by buffering dioxygen, nitric oxide and carbon monoxide, and promoting the formation of reactive oxygen species (ROS, e.g. H(2)O(2)). This role is essential for symbiotic nitrogen fixation (SNF). This is Leghemoglobin-1 from Pisum sativum (Garden pea).